The primary structure comprises 340 residues: Fructose-1,6-bisphosphatase class 1 (340 aa).

Residues E107, D126, L128, and D129 each contribute to the Mg(2+) site. N215 contacts substrate. E287 lines the Mg(2+) pocket.

Belongs to the FBPase class 1 family. As to quaternary structure, homotetramer. Requires Mg(2+) as cofactor.

Its subcellular location is the cytoplasm. It carries out the reaction beta-D-fructose 1,6-bisphosphate + H2O = beta-D-fructose 6-phosphate + phosphate. The protein operates within carbohydrate biosynthesis; gluconeogenesis. This Brucella suis (strain ATCC 23445 / NCTC 10510) protein is Fructose-1,6-bisphosphatase class 1.